The sequence spans 365 residues: Galactoside alpha-(1,2)-fucosyltransferase 1 (365 aa).

Residues Met-1 to His-8 are Cytoplasmic-facing. Residues Leu-9–Phe-25 traverse the membrane as a helical; Signal-anchor for type II membrane protein segment. Residues Leu-26 to Pro-365 are Lumenal-facing. 3 N-linked (GlcNAc...) asparagine glycosylation sites follow: Asn-65, Asn-301, and Asn-327.

This sequence belongs to the glycosyltransferase 11 family.

It is found in the golgi apparatus. The protein localises to the golgi stack membrane. The catalysed reaction is a beta-D-galactosyl-(1-&gt;4)-N-acetyl-beta-D-glucosaminyl derivative + GDP-beta-L-fucose = an alpha-L-Fuc-(1-&gt;2)-beta-D-Gal-(1-&gt;4)-beta-D-GlcNAc derivative + GDP + H(+). It carries out the reaction a ganglioside GA1 + GDP-beta-L-fucose = a ganglioside Fuc-GA1 + GDP + H(+). It catalyses the reaction a beta-D-Gal-(1-&gt;3)-beta-D-GlcNAc-(1-&gt;3)-beta-D-Gal-(1-&gt;4)-beta-D-Glc-(1&lt;-&gt;1')-Cer(d18:1(4E)) + GDP-beta-L-fucose = alpha-L-fucosyl-(1-&gt;2)- beta-D-galactosyl-(1-&gt;3)-N-acetyl-beta-D-glucosaminyl-(1-&gt;3)-beta-D-galactosyl-(1-&gt;4)-beta-D-glucosyl-(1&lt;-&gt;1')-N-acylsphing-4-enine + GDP + H(+). The enzyme catalyses a neolactoside nLc4Cer(d18:1(4E)) + GDP-beta-L-fucose = a neolactoside IV(2)-alpha-Fuc-nLc4Cer(d18:1(4E)) + GDP + H(+). The catalysed reaction is a ganglioside GM1 + GDP-beta-L-fucose = a ganglioside Fuc-GM1 + GDP + H(+). It carries out the reaction beta-D-galactosyl-(1-&gt;3)-N-acetyl-D-galactosamine + GDP-beta-L-fucose = alpha-L-fucosyl-(1-&gt;2)-beta-D-galactosyl-(1-&gt;3)-N-acetyl-D-galactosamine + GDP + H(+). It participates in protein modification; protein glycosylation. Its function is as follows. Catalyzes the transfer of L-fucose, from a guanosine diphosphate-beta-L-fucose, to the terminal galactose residue of glycoconjugates through an alpha(1,2) linkage leading to H antigen synthesis that is an intermediate substrate in the synthesis of ABO blood group antigens. H antigen is essential for maturation of the glomerular layer of the main olfactory bulb, in cell migration and early cell-cell contacts during tumor associated angiogenesis. Preferentially fucosylates soluble lactose and to a lesser extent fucosylates glycolipids gangliosides GA1 and GM1a. The sequence is that of Galactoside alpha-(1,2)-fucosyltransferase 1 from Mico humeralifer (Black and white tassel-ear marmoset).